A 230-amino-acid chain; its full sequence is Putative transcription factor bHLH107 (230 aa).

The region spanning 44-93 (ASLRNHKEAERKRRARINSHLNKLRKLLSCNSKTDKSTLLAKVVQRVKEL) is the bHLH domain.

As to quaternary structure, homodimer.

The protein resides in the nucleus. The sequence is that of Putative transcription factor bHLH107 (BHLH107) from Arabidopsis thaliana (Mouse-ear cress).